Here is a 457-residue protein sequence, read N- to C-terminus: Ig mu chain C region (457 aa).

Residues 1-105 form a CH1 region; it reads SSSAPLLFPL…GEKEKKVELQ (105 aa). C27 and C89 are oxidised to a cystine. N-linked (GlcNAc...) asparagine glycans are attached at residues N45 and N113. The interval 106–220 is CH2; the sequence is VTPELPPNVS…KNVSSVCMGD (115 aa). An intrachain disulfide couples C136 to C200. N-linked (GlcNAc...) asparagine glycans are attached at residues N212, N276, and N283. Residues 221 to 326 form a CH3 region; sequence DTSTGISVFL…PLKQSLSRPK (106 aa). Cystine bridges form between C248-C307 and C355-C417. The tract at residues 327 to 457 is CH4; that stretch reads DVANDPPSVF…VLSDTASTCY (131 aa). N444 is a glycosylation site (N-linked (GlcNAc...) asparagine).

This Suncus murinus (Asian house shrew) protein is Ig mu chain C region.